Reading from the N-terminus, the 308-residue chain is UDP-3-O-acyl-N-acetylglucosamine deacetylase (308 aa).

Positions 78, 235, and 239 each coordinate Zn(2+). H262 serves as the catalytic Proton donor.

The protein belongs to the LpxC family. It depends on Zn(2+) as a cofactor.

The catalysed reaction is a UDP-3-O-[(3R)-3-hydroxyacyl]-N-acetyl-alpha-D-glucosamine + H2O = a UDP-3-O-[(3R)-3-hydroxyacyl]-alpha-D-glucosamine + acetate. It functions in the pathway glycolipid biosynthesis; lipid IV(A) biosynthesis; lipid IV(A) from (3R)-3-hydroxytetradecanoyl-[acyl-carrier-protein] and UDP-N-acetyl-alpha-D-glucosamine: step 2/6. Its function is as follows. Catalyzes the hydrolysis of UDP-3-O-myristoyl-N-acetylglucosamine to form UDP-3-O-myristoylglucosamine and acetate, the committed step in lipid A biosynthesis. This is UDP-3-O-acyl-N-acetylglucosamine deacetylase from Anaeromyxobacter dehalogenans (strain 2CP-C).